A 94-amino-acid polypeptide reads, in one-letter code: MFKVNEYFDGTVKSIAFGTAEGPATIGVMAAGEYEFGTSQREIMHVVSGALTVKLPDSSDWETFAAGSQFNVPANSKFQLKVAVDTAYLCEYRG.

This sequence belongs to the nucleoside phosphorylase PpnP family.

It catalyses the reaction a purine D-ribonucleoside + phosphate = a purine nucleobase + alpha-D-ribose 1-phosphate. It carries out the reaction adenosine + phosphate = alpha-D-ribose 1-phosphate + adenine. The catalysed reaction is cytidine + phosphate = cytosine + alpha-D-ribose 1-phosphate. The enzyme catalyses guanosine + phosphate = alpha-D-ribose 1-phosphate + guanine. It catalyses the reaction inosine + phosphate = alpha-D-ribose 1-phosphate + hypoxanthine. It carries out the reaction thymidine + phosphate = 2-deoxy-alpha-D-ribose 1-phosphate + thymine. The catalysed reaction is uridine + phosphate = alpha-D-ribose 1-phosphate + uracil. The enzyme catalyses xanthosine + phosphate = alpha-D-ribose 1-phosphate + xanthine. Its function is as follows. Catalyzes the phosphorolysis of diverse nucleosides, yielding D-ribose 1-phosphate and the respective free bases. Can use uridine, adenosine, guanosine, cytidine, thymidine, inosine and xanthosine as substrates. Also catalyzes the reverse reactions. This is Pyrimidine/purine nucleoside phosphorylase from Pseudomonas fluorescens (strain Pf0-1).